A 297-amino-acid chain; its full sequence is Bifunctional protein FolD (297 aa).

NADP(+)-binding positions include 167 to 169 (GRS), Ser-192, and Ile-233.

Belongs to the tetrahydrofolate dehydrogenase/cyclohydrolase family. Homodimer.

The enzyme catalyses (6R)-5,10-methylene-5,6,7,8-tetrahydrofolate + NADP(+) = (6R)-5,10-methenyltetrahydrofolate + NADPH. It carries out the reaction (6R)-5,10-methenyltetrahydrofolate + H2O = (6R)-10-formyltetrahydrofolate + H(+). It participates in one-carbon metabolism; tetrahydrofolate interconversion. Catalyzes the oxidation of 5,10-methylenetetrahydrofolate to 5,10-methenyltetrahydrofolate and then the hydrolysis of 5,10-methenyltetrahydrofolate to 10-formyltetrahydrofolate. This chain is Bifunctional protein FolD, found in Caulobacter vibrioides (strain ATCC 19089 / CIP 103742 / CB 15) (Caulobacter crescentus).